The sequence spans 229 residues: MGYVRWLGHAAFEISIDGYTVLIDPWLTNPLSPVKVEDYRDKVDLIIVTHDHGDHLGESVELLRINRRARFVAVYELANYVAEQLGGATDRVIGANIGGPVRIPDINLKVMFFPATHSSSRGTPTGVLIVGKETSIYHAGDTGLAAEMALVGELYSPKIALVPIGGHFTMDAYQAAKAIEMLRAKVVIPMHYNTFPVIRADPEELKRYVDEFKLDAKVVVLKPGELYQF.

It belongs to the UPF0173 family.

This Hyperthermus butylicus (strain DSM 5456 / JCM 9403 / PLM1-5) protein is UPF0173 metal-dependent hydrolase Hbut_0886.